The primary structure comprises 330 residues: Aspartate--ammonia ligase (330 aa).

Belongs to the class-II aminoacyl-tRNA synthetase family. AsnA subfamily.

Its subcellular location is the cytoplasm. It catalyses the reaction L-aspartate + NH4(+) + ATP = L-asparagine + AMP + diphosphate + H(+). Its pathway is amino-acid biosynthesis; L-asparagine biosynthesis; L-asparagine from L-aspartate (ammonia route): step 1/1. This Escherichia coli (strain SMS-3-5 / SECEC) protein is Aspartate--ammonia ligase.